Consider the following 214-residue polypeptide: Thymidylate kinase (214 aa).

10 to 17 contacts ATP; the sequence is GPDGAGKT.

This sequence belongs to the thymidylate kinase family.

The catalysed reaction is dTMP + ATP = dTDP + ADP. Phosphorylation of dTMP to form dTDP in both de novo and salvage pathways of dTTP synthesis. This chain is Thymidylate kinase, found in Latilactobacillus sakei subsp. sakei (strain 23K) (Lactobacillus sakei subsp. sakei).